A 253-amino-acid polypeptide reads, in one-letter code: Indole-3-glycerol phosphate synthase (253 aa).

This sequence belongs to the TrpC family.

It catalyses the reaction 1-(2-carboxyphenylamino)-1-deoxy-D-ribulose 5-phosphate + H(+) = (1S,2R)-1-C-(indol-3-yl)glycerol 3-phosphate + CO2 + H2O. Its pathway is amino-acid biosynthesis; L-tryptophan biosynthesis; L-tryptophan from chorismate: step 4/5. The sequence is that of Indole-3-glycerol phosphate synthase from Bacillus anthracis (strain A0248).